The primary structure comprises 263 residues: tRNA pseudouridine synthase A (263 aa).

Residue Asp51 is the Nucleophile of the active site. Tyr106 provides a ligand contact to substrate.

This sequence belongs to the tRNA pseudouridine synthase TruA family.

The catalysed reaction is uridine(38/39/40) in tRNA = pseudouridine(38/39/40) in tRNA. Its function is as follows. Formation of pseudouridine at positions 38, 39 and 40 in the anticodon stem and loop of transfer RNAs. The sequence is that of tRNA pseudouridine synthase A from Pyrococcus abyssi (strain GE5 / Orsay).